A 217-amino-acid polypeptide reads, in one-letter code: Large ribosomal subunit protein uL1 (217 aa).

S2 is subject to N-acetylserine. Y11 carries the phosphotyrosine modification. N6-acetyllysine is present on residues K91 and K106. The residue at position 118 (K118) is an N6-acetyllysine; alternate. A Glycyl lysine isopeptide (Lys-Gly) (interchain with G-Cter in SUMO1); alternate cross-link involves residue K118. A Glycyl lysine isopeptide (Lys-Gly) (interchain with G-Cter in SUMO2); alternate cross-link involves residue K118. K161 is covalently cross-linked (Glycyl lysine isopeptide (Lys-Gly) (interchain with G-Cter in SUMO2)).

This sequence belongs to the universal ribosomal protein uL1 family. In terms of assembly, component of the large ribosomal subunit.

The protein resides in the cytoplasm. Its function is as follows. Component of the large ribosomal subunit. The ribosome is a large ribonucleoprotein complex responsible for the synthesis of proteins in the cell. The protein is Large ribosomal subunit protein uL1 (Rpl10a) of Mus musculus (Mouse).